The following is a 61-amino-acid chain: TSACCDKCFCTKSNPPICQCRDVGETCHSACKFCICALSYPAQCHCLDQNTFCYDKCDSDS.

Intrachain disulfides connect Cys-4–Cys-57, Cys-5–Cys-20, Cys-8–Cys-53, Cys-10–Cys-18, Cys-27–Cys-34, Cys-31–Cys-46, and Cys-36–Cys-44.

Belongs to the Bowman-Birk serine protease inhibitor family.

In terms of biological role, strong inhibitor of trypsin with a 1:1 stoichiometry. Weaker inhibitor of chymotrypsin. The polypeptide is Bowman-Birk type proteinase inhibitor (Erythrina variegata (Indian coral tree)).